Consider the following 40-residue polypeptide: Proteinase inhibitor IIB (40 aa).

Cystine bridges form between C2–C16, C6–C28, and C12–C38.

This sequence belongs to the protease inhibitor I20 (potato type II proteinase inhibitor) family.

Its subcellular location is the secreted. Its function is as follows. Inhibits chymotrypsin and subtilisin strongly. This is Proteinase inhibitor IIB from Solanum tuberosum (Potato).